Reading from the N-terminus, the 209-residue chain is Redox-sensing transcriptional repressor Rex (209 aa).

The segment at residues 16–55 is a DNA-binding region (H-T-H motif); the sequence is LYYRFIQNLSLSGKQRVSSAELSEAVKVDSATIRRDFSYF. 90–95 contributes to the NAD(+) binding site; that stretch reads GVGNLG.

This sequence belongs to the transcriptional regulatory Rex family. As to quaternary structure, homodimer.

The protein localises to the cytoplasm. Modulates transcription in response to changes in cellular NADH/NAD(+) redox state. The chain is Redox-sensing transcriptional repressor Rex from Bacillus cereus (strain G9842).